Consider the following 85-residue polypeptide: Fungal defensin triintsin (85 aa).

The first 21 residues, 1–21, serve as a signal peptide directing secretion; that stretch reads MQFTKLATVLIVSLMGSAAIA. A propeptide spanning residues 22–47 is cleaved from the precursor; it reads APSVDNAPAVAAEEVAAAPAENLEKR. 3 disulfide bridges follow: Cys-51/Cys-72, Cys-58/Cys-80, and Cys-62/Cys-82.

It belongs to the invertebrate defensin family. Post-translationally, disulfide bonds are essential for antimicrobial activity.

It is found in the secreted. In terms of biological role, antimicrobial peptide with broad-spectrum activity against Gram-positive bacteria, Gram-negative bacteria, and fungi. Also inhibits clinical isolates, including methicillin-resistant S.aureus (MRSA) (MIC=32 uM), K.pneumoniae, C.albicans and C.parapsilosis. Displays minimal inhibitory concentration (MIC) values similar to minimal bactericidal concentrations (MBC), suggesting a disruptive mechanism mode of action associated with membrane lysis. In vitro, shows hemolytic activity against human red blood cells. In Trichophyton interdigitale (strain MR816), this protein is Fungal defensin triintsin.